A 182-amino-acid polypeptide reads, in one-letter code: Hypoxanthine/guanine phosphoribosyltransferase (182 aa).

This sequence belongs to the purine/pyrimidine phosphoribosyltransferase family. Archaeal HPRT subfamily. As to quaternary structure, homodimer.

It localises to the cytoplasm. The enzyme catalyses IMP + diphosphate = hypoxanthine + 5-phospho-alpha-D-ribose 1-diphosphate. The catalysed reaction is GMP + diphosphate = guanine + 5-phospho-alpha-D-ribose 1-diphosphate. Its pathway is purine metabolism; IMP biosynthesis via salvage pathway; IMP from hypoxanthine: step 1/1. In terms of biological role, catalyzes a salvage reaction resulting in the formation of IMP that is energically less costly than de novo synthesis. This Methanosphaerula palustris (strain ATCC BAA-1556 / DSM 19958 / E1-9c) protein is Hypoxanthine/guanine phosphoribosyltransferase.